The sequence spans 80 residues: Exodeoxyribonuclease 7 small subunit (80 aa).

Belongs to the XseB family. As to quaternary structure, heterooligomer composed of large and small subunits.

It is found in the cytoplasm. It carries out the reaction Exonucleolytic cleavage in either 5'- to 3'- or 3'- to 5'-direction to yield nucleoside 5'-phosphates.. Bidirectionally degrades single-stranded DNA into large acid-insoluble oligonucleotides, which are then degraded further into small acid-soluble oligonucleotides. The polypeptide is Exodeoxyribonuclease 7 small subunit (Edwardsiella ictaluri (strain 93-146)).